Consider the following 158-residue polypeptide: UPAR/Ly6 domain-containing protein crim (158 aa).

The N-terminal stretch at 1–22 is a signal peptide; sequence MHYHTNLIAALLLAALIHEGSA. The Extracellular portion of the chain corresponds to 23 to 136; sequence IWCYRCTSAT…FCFLDHRCNG (114 aa). The N-linked (GlcNAc...) asparagine glycan is linked to asparagine 107. Asparagine 135 carries GPI-anchor amidated asparagine lipidation. Positions 136 to 158 are cleaved as a propeptide — removed in mature form; sequence GASGLQTSAVIGLLTLIPALLLR. The helical transmembrane segment at 137-157 threads the bilayer; it reads ASGLQTSAVIGLLTLIPALLL. Residue arginine 158 is a topological domain, cytoplasmic.

This sequence belongs to the quiver family.

It is found in the membrane. Functionally, required for septate junction assembly possibly by organizing the preassembly and transport of septate junction proteins. Involved in epithelial cell septate junction-mediated paracellular barrier functions of trachea, hindgut and salivary gland. The chain is UPAR/Ly6 domain-containing protein crim from Drosophila melanogaster (Fruit fly).